A 150-amino-acid polypeptide reads, in one-letter code: Large ribosomal subunit protein uL11 (150 aa).

Belongs to the universal ribosomal protein uL11 family. As to quaternary structure, part of the ribosomal stalk of the 50S ribosomal subunit. Interacts with L10 and the large rRNA to form the base of the stalk. L10 forms an elongated spine to which L12 dimers bind in a sequential fashion forming a multimeric L10(L12)X complex. One or more lysine residues are methylated.

Its function is as follows. Forms part of the ribosomal stalk which helps the ribosome interact with GTP-bound translation factors. This Cereibacter sphaeroides (strain ATCC 17025 / ATH 2.4.3) (Rhodobacter sphaeroides) protein is Large ribosomal subunit protein uL11.